A 592-amino-acid polypeptide reads, in one-letter code: Cryptochrome-2 (592 aa).

The region spanning 21–150 (ASSVHWFRKG…EVVTENSHTL (130 aa)) is the Photolyase/cryptochrome alpha/beta domain. Residue Lys29 forms a Glycyl lysine isopeptide (Lys-Gly) (interchain with G-Cter in ubiquitin) linkage. A Phosphoserine modification is found at Ser89. Glycyl lysine isopeptide (Lys-Gly) (interchain with G-Cter in ubiquitin) cross-links involve residues Lys125 and Lys241. At Ser265 the chain carries Phosphoserine; by MAPK. Ser270 lines the FAD pocket. The residue at position 298 (Ser298) is a Phosphoserine. Gln307 serves as a coordination point for FAD. Lys347 is covalently cross-linked (Glycyl lysine isopeptide (Lys-Gly) (interchain with G-Cter in ubiquitin)). FAD-binding positions include His373 and 405–407 (DAD). The required for inhibition of CLOCK-BMAL1-mediated transcription stretch occupies residues 389-488 (WVSWESGVRV…IIGVDYPRPI (100 aa)). Residues Lys474 and Lys503 each participate in a glycyl lysine isopeptide (Lys-Gly) (interchain with G-Cter in ubiquitin) cross-link. The disordered stretch occupies residues 532-592 (VAEPGSSQAG…PTQEPASKDS (61 aa)). Over residues 536 to 547 (GSSQAGSISNTG) the composition is skewed to polar residues. Ser553 carries the post-translational modification Phosphoserine; by GSK3-beta. Phosphoserine; by DYRK1A and MAPK is present on Ser557. Residues 582–592 (MPTQEPASKDS) are compositionally biased toward polar residues.

The protein belongs to the DNA photolyase class-1 family. As to quaternary structure, component of the circadian core oscillator, which includes the CRY proteins, CLOCK or NPAS2, BMAL1 or BMAL2, CSNK1D and/or CSNK1E, TIMELESS, and the PER proteins. Interacts with TIMELESS. Interacts directly with PER1, PER2 and PER3; interaction with PER2 inhibits its ubiquitination and vice versa. Interacts with CLOCK-BMAL1. Interacts with BMAL1. Interacts with CLOCK. Interacts with NFIL3. Interacts with FBXL3 and FBXL21. FBXL3, PER2 and the cofactor FAD compete for overlapping binding sites. FBXL3 cannot bind CRY2 that interacts already with PER2 or that contains bound FAD. Interacts with PPP5C (via TPR repeats); the interaction down-regulates the PPP5C phosphatase activity on CSNK1E. Interacts with nuclear receptors AR and NR3C1/GR; the interaction is ligand dependent. Interacts with PRKDC. Interacts with CIART. Interacts with DDB1, USP7 and TARDBP. Interacts with HNF4A. Interacts with PPARA. Interacts with PPARG in a ligand-dependent manner. Interacts with PPARD (via domain NR LBD) in a ligand-dependent manner. Interacts with NR1I2 (via domain NR LBD) in a ligand-dependent manner. Interacts with NR1I3 and VDR in a ligand-dependent manner. It depends on FAD as a cofactor. The cofactor is (6R)-5,10-methylene-5,6,7,8-tetrahydrofolate. In terms of processing, phosphorylation on Ser-265 by MAPK is important for the inhibition of CLOCK-BMAL1-mediated transcriptional activity. Phosphorylation by CSKNE requires interaction with PER1 or PER2. Phosphorylated in a circadian manner at Ser-553 and Ser-557 in the suprachiasmatic nucleus (SCN) and liver. Phosphorylation at Ser-557 by DYRK1A promotes subsequent phosphorylation at Ser-553 by GSK3-beta: the two-step phosphorylation at the neighboring Ser residues leads to its proteasomal degradation. Post-translationally, ubiquitinated by the SCF(FBXL3) and SCF(FBXL21) complexes, regulating the balance between degradation and stabilization. The SCF(FBXL3) complex is mainly nuclear and mediates ubiquitination and subsequent degradation of CRY2. In contrast, cytoplasmic SCF(FBXL21) complex-mediated ubiquitination leads to stabilize CRY2 and counteract the activity of the SCF(FBXL3) complex. The SCF(FBXL3) and SCF(FBXL21) complexes probably mediate ubiquitination at different Lys residues. The SCF(FBXL3) complex recognizes and binds CRY2 phosphorylated at Ser-553 and Ser-557. Ubiquitination may be inhibited by PER2. Deubiquitinated by USP7. In terms of tissue distribution, expression in the retina is restricted to the photoreceptor layer (at protein level). Expressed in all tissues examined including heart, brain, spleen, lung, liver, skeletal muscle, kidney and testis. Weak expression in spleen.

It localises to the cytoplasm. The protein localises to the nucleus. KL001 (N-[3-(9H-carbazol-9-yl)-2-hydroxypropyl]-N-(2-furanylmethyl)-methanesulfonamide) binds to CRY1 and stabilizes it by inhibiting FBXL3- and ubiquitin-dependent degradation of CRY1 resulting in lengthening of the circadian periods. KL001-mediated CRY1 stabilization can inhibit glucagon-induced gluconeogenesis in primary hepatocytes. Functionally, transcriptional repressor which forms a core component of the circadian clock. The circadian clock, an internal time-keeping system, regulates various physiological processes through the generation of approximately 24 hour circadian rhythms in gene expression, which are translated into rhythms in metabolism and behavior. It is derived from the Latin roots 'circa' (about) and 'diem' (day) and acts as an important regulator of a wide array of physiological functions including metabolism, sleep, body temperature, blood pressure, endocrine, immune, cardiovascular, and renal function. Consists of two major components: the central clock, residing in the suprachiasmatic nucleus (SCN) of the brain, and the peripheral clocks that are present in nearly every tissue and organ system. Both the central and peripheral clocks can be reset by environmental cues, also known as Zeitgebers (German for 'timegivers'). The predominant Zeitgeber for the central clock is light, which is sensed by retina and signals directly to the SCN. The central clock entrains the peripheral clocks through neuronal and hormonal signals, body temperature and feeding-related cues, aligning all clocks with the external light/dark cycle. Circadian rhythms allow an organism to achieve temporal homeostasis with its environment at the molecular level by regulating gene expression to create a peak of protein expression once every 24 hours to control when a particular physiological process is most active with respect to the solar day. Transcription and translation of core clock components (CLOCK, NPAS2, BMAL1, BMAL2, PER1, PER2, PER3, CRY1 and CRY2) plays a critical role in rhythm generation, whereas delays imposed by post-translational modifications (PTMs) are important for determining the period (tau) of the rhythms (tau refers to the period of a rhythm and is the length, in time, of one complete cycle). A diurnal rhythm is synchronized with the day/night cycle, while the ultradian and infradian rhythms have a period shorter and longer than 24 hours, respectively. Disruptions in the circadian rhythms contribute to the pathology of cardiovascular diseases, cancer, metabolic syndromes and aging. A transcription/translation feedback loop (TTFL) forms the core of the molecular circadian clock mechanism. Transcription factors, CLOCK or NPAS2 and BMAL1 or BMAL2, form the positive limb of the feedback loop, act in the form of a heterodimer and activate the transcription of core clock genes and clock-controlled genes (involved in key metabolic processes), harboring E-box elements (5'-CACGTG-3') within their promoters. The core clock genes: PER1/2/3 and CRY1/2 which are transcriptional repressors form the negative limb of the feedback loop and interact with the CLOCK|NPAS2-BMAL1|BMAL2 heterodimer inhibiting its activity and thereby negatively regulating their own expression. This heterodimer also activates nuclear receptors NR1D1/2 and RORA/B/G, which form a second feedback loop and which activate and repress BMAL1 transcription, respectively. CRY1 and CRY2 have redundant functions but also differential and selective contributions at least in defining the pace of the SCN circadian clock and its circadian transcriptional outputs. Less potent transcriptional repressor in cerebellum and liver than CRY1, though less effective in lengthening the period of the SCN oscillator. Seems to play a critical role in tuning SCN circadian period by opposing the action of CRY1. With CRY1, dispensable for circadian rhythm generation but necessary for the development of intercellular networks for rhythm synchrony. May mediate circadian regulation of cAMP signaling and gluconeogenesis by blocking glucagon-mediated increases in intracellular cAMP concentrations and in CREB1 phosphorylation. Besides its role in the maintenance of the circadian clock, is also involved in the regulation of other processes. Plays a key role in glucose and lipid metabolism modulation, in part, through the transcriptional regulation of genes involved in these pathways, such as LEP or ACSL4. Represses glucocorticoid receptor NR3C1/GR-induced transcriptional activity by binding to glucocorticoid response elements (GREs). Represses the CLOCK-BMAL1 induced transcription of BHLHE40/DEC1 and NAMPT. Represses PPARD and its target genes in the skeletal muscle and limits exercise capacity. Represses the transcriptional activity of NR1I2. This is Cryptochrome-2 (Cry2) from Mus musculus (Mouse).